We begin with the raw amino-acid sequence, 357 residues long: Chorismate synthase (357 aa).

The segment covering 38–49 (EKDIQPDLDRRK) has biased composition (basic and acidic residues). Residues 38–60 (EKDIQPDLDRRKPGTSRYTTPRR) are disordered. NADP(+) is bound by residues Arg-48 and Arg-54. FMN contacts are provided by residues 125-127 (RSS), 243-244 (NA), Gly-283, 298-302 (KPTSS), and Arg-324.

It belongs to the chorismate synthase family. As to quaternary structure, homotetramer. Requires FMNH2 as cofactor.

It catalyses the reaction 5-O-(1-carboxyvinyl)-3-phosphoshikimate = chorismate + phosphate. It participates in metabolic intermediate biosynthesis; chorismate biosynthesis; chorismate from D-erythrose 4-phosphate and phosphoenolpyruvate: step 7/7. Functionally, catalyzes the anti-1,4-elimination of the C-3 phosphate and the C-6 proR hydrogen from 5-enolpyruvylshikimate-3-phosphate (EPSP) to yield chorismate, which is the branch point compound that serves as the starting substrate for the three terminal pathways of aromatic amino acid biosynthesis. This reaction introduces a second double bond into the aromatic ring system. This is Chorismate synthase from Haemophilus influenzae (strain PittGG).